The sequence spans 134 residues: Large ribosomal subunit protein uL22 (134 aa).

This sequence belongs to the universal ribosomal protein uL22 family. Part of the 50S ribosomal subunit. Contacts protein L32.

In terms of biological role, this protein binds specifically to 23S rRNA; its binding is stimulated by other ribosomal proteins, e.g. L4, L17, and L20. It is important during the early stages of 50S assembly. It makes multiple contacts with different domains of the 23S rRNA in the assembled 50S subunit and ribosome. Its function is as follows. The globular domain of the protein is located by the polypeptide exit tunnel on the outside of the subunit while an extended beta-hairpin forms part of the wall of the tunnel. Forms a pair of 'tweezers' with L32 that hold together two different domains of the 23S rRNA. Interacts with the tunnel-blocking modified macrolide azithromycin. Upon binding of the macrolide troleadomycin to the ribosome, the tip of the beta-hairpin is displaced, which severely restricts the tunnel. This and experiments in E.coli have led to the suggestion that it is part of the gating mechanism involved in translation arrest in the absence of the protein export system. The chain is Large ribosomal subunit protein uL22 (rplV) from Deinococcus radiodurans (strain ATCC 13939 / DSM 20539 / JCM 16871 / CCUG 27074 / LMG 4051 / NBRC 15346 / NCIMB 9279 / VKM B-1422 / R1).